The primary structure comprises 1276 residues: Sterol regulatory element-binding protein cleavage-activating protein (1276 aa).

Residues methionine 1 to histidine 18 are Cytoplasmic-facing. Residues glycine 19–alanine 39 form a helical membrane-spanning segment. Topologically, residues cysteine 40–glutamate 279 are lumenal. The interval lysine 46–glutamate 284 is loop-1. Residues proline 60–glutamine 81 are disordered. The N-linked (GlcNAc...) asparagine glycan is linked to asparagine 263. The helical transmembrane segment at isoleucine 280–tyrosine 300 threads the bilayer. The SSD domain maps to glutamate 284–isoleucine 442. Residues phenylalanine 301–lysine 312 are Cytoplasmic-facing. The helical transmembrane segment at tryptophan 313–leucine 333 threads the bilayer. Over cysteine 334–asparagine 344 the chain is Lumenal. A helical membrane pass occupies residues glycine 345–threonine 365. Topologically, residues lysine 366 to glycine 401 are cytoplasmic. A helical membrane pass occupies residues isoleucine 402 to valine 422. Position 423 (valine 423) is a topological domain, lumenal. A helical membrane pass occupies residues glycine 424–isoleucine 444. The Cytoplasmic segment spans residues arginine 445–arginine 518. Residues methionine 447 to leucine 452 carry the ER export signal motif. Glycyl lysine isopeptide (Lys-Gly) (interchain with G-Cter in ubiquitin) cross-links involve residues lysine 454 and lysine 466. The helical transmembrane segment at leucine 519 to leucine 539 threads the bilayer. A loop-7 region spans residues aspartate 535 to lysine 710. The Lumenal segment spans residues arginine 540–threonine 707. Asparagine 590 and asparagine 641 each carry an N-linked (GlcNAc...) asparagine glycan. The chain crosses the membrane as a helical span at residues leucine 708–cysteine 728. At leucine 729–aspartate 1276 the chain is on the cytoplasmic side. Residues arginine 731–aspartate 1276 are interaction with SREBF2. Residues valine 771–arginine 811 form a WD 1 repeat. A phosphoserine mark is found at serine 821, serine 837, serine 843, serine 850, serine 905, and serine 934. A disordered region spans residues glutamate 834–arginine 903. The interval serine 928–alanine 958 is disordered. WD repeat units follow at residues alanine 949 to serine 999 and glutamate 1002 to proline 1039. Arginine 1048 is modified (omega-N-methylarginine). 4 WD repeats span residues alanine 1074–threonine 1111, glycine 1114–histidine 1152, alanine 1155–serine 1192, and glutamine 1194–threonine 1232.

It belongs to the WD repeat SCAP family. Membrane region forms a homotetramer. Component of the SCAP-SREBP complex (composed of SCAP and SREBF1/SREBP1 or SREBF2/SREBP2); interacts with SREBF1/SREBP1 or SREBF2/SREBP2 through its C-terminal cytoplasmic domain. Forms a ternary complex with INSIG1 or INSIG2 through its transmembrane domains at high sterol concentrations. Interacts with PAQR3; the interaction anchors the SCAP-SREBP complex to the Golgi apparatus in low cholesterol conditions. Interacts with the SEC23-SEC24 complex in a SAR1-GTP-dependent manner through an ER export signal in its third cytoplasmic loop. Interacts with RNF139; the interaction inhibits the interaction of SCAP with SEC24B and hampering the ER to Golgi transport of the SCAP-SREBP complex. Interacts with SPRING1. Ubiquitinated at Lys-454 and Lys-466. RNF145 triggers ubiquitination of SCAP, likely inhibiting SCAP-SREBP complex transport to the Golgi apparatus and the subsequent processing/maturation of SREBF2/SREBP2.

It localises to the endoplasmic reticulum membrane. The protein resides in the golgi apparatus membrane. It is found in the cytoplasmic vesicle. Its subcellular location is the COPII-coated vesicle membrane. Escort protein required for cholesterol as well as lipid homeostasis. Regulates export of the SCAP-SREBP complex from the endoplasmic reticulum to the Golgi upon low cholesterol, thereby regulating the processing of sterol regulatory element-binding proteins (SREBPs) SREBF1/SREBP1 and SREBF2/SREBP2. At high sterol concentrations, formation of a ternary complex with INSIG (INSIG1 or INSIG2) leads to mask the ER export signal in SCAP, promoting retention of the complex in the endoplasmic reticulum. Low sterol concentrations trigger release of INSIG, a conformational change in the SSD domain of SCAP, unmasking of the ER export signal, promoting recruitment into COPII-coated vesicles and transport of the SCAP-SREBP to the Golgi: in the Golgi, SREBPs are then processed, releasing the transcription factor fragment of SREBPs from the membrane, its import into the nucleus and up-regulation of LDLR, INSIG1 and the mevalonate pathway. Binds cholesterol via its SSD domain. This chain is Sterol regulatory element-binding protein cleavage-activating protein, found in Rattus norvegicus (Rat).